The chain runs to 112 residues: Large ribosomal subunit protein uL22 (112 aa).

It belongs to the universal ribosomal protein uL22 family. In terms of assembly, part of the 50S ribosomal subunit.

In terms of biological role, this protein binds specifically to 23S rRNA; its binding is stimulated by other ribosomal proteins, e.g. L4, L17, and L20. It is important during the early stages of 50S assembly. It makes multiple contacts with different domains of the 23S rRNA in the assembled 50S subunit and ribosome. Functionally, the globular domain of the protein is located near the polypeptide exit tunnel on the outside of the subunit, while an extended beta-hairpin is found that lines the wall of the exit tunnel in the center of the 70S ribosome. The chain is Large ribosomal subunit protein uL22 from Anaplasma phagocytophilum (strain HZ).